The sequence spans 424 residues: Zinc finger and BTB domain-containing protein 6 (424 aa).

A BTB domain is found at 33–97 (CDVSIYINDT…CYTGALEVKR (65 aa)). Ser-202 bears the Phosphoserine mark. C2H2-type zinc fingers lie at residues 301–323 (HQCP…LKMH), 326–348 (FLCL…IRGH), 354–376 (FQCT…LNIH), and 382–405 (YKCH…TSVH). The disordered stretch occupies residues 402–424 (TSVHGRSSGEKLSRPDLKRQSLL). The segment covering 408–424 (SSGEKLSRPDLKRQSLL) has biased composition (basic and acidic residues).

Widely expressed with highest levels in brain.

It localises to the nucleus. May be involved in transcriptional regulation. This chain is Zinc finger and BTB domain-containing protein 6 (ZBTB6), found in Homo sapiens (Human).